We begin with the raw amino-acid sequence, 98 residues long: NADH-ubiquinone oxidoreductase chain 4L (98 aa).

The next 3 helical transmembrane spans lie at 1–21 (MTLIHMNIFMAFTMSLTGFLM), 29–49 (ALLCLEGMILSLFILVTLTVL), and 59–79 (MPIILLVFAACEAAIGLALLV).

This sequence belongs to the complex I subunit 4L family. In terms of assembly, core subunit of respiratory chain NADH dehydrogenase (Complex I) which is composed of 45 different subunits.

The protein localises to the mitochondrion inner membrane. It catalyses the reaction a ubiquinone + NADH + 5 H(+)(in) = a ubiquinol + NAD(+) + 4 H(+)(out). Its function is as follows. Core subunit of the mitochondrial membrane respiratory chain NADH dehydrogenase (Complex I) which catalyzes electron transfer from NADH through the respiratory chain, using ubiquinone as an electron acceptor. Part of the enzyme membrane arm which is embedded in the lipid bilayer and involved in proton translocation. This is NADH-ubiquinone oxidoreductase chain 4L (MT-ND4L) from Inia geoffrensis (Amazon river dolphin).